A 553-amino-acid chain; its full sequence is Solute carrier family 45 member 3 (553 aa).

Helical transmembrane passes span 19–39 (LLVNLLTFGLEVCLAAGITYV), 52–72 (FMTMVLGIGPVLGLVSVPLLG), 88–108 (FIWALSLGVLLSLFLIPRAGW), 120–140 (LELALLILGVGLLDFCGQVCF), 161–181 (FSVYAFMISLGGCLGYLLPAI), 198–218 (CLFGLLTLIFLICMAATLFVT), 275–295 (FVAELCSWMALMTFTLFYTDF), 323–343 (MGSLGLFLQCAISLVFSLVMD), 353–373 (SVYLASVMTFPVAAAATCLSH), 382–402 (AALTGFTFSALQILPYTLASL), and 522–542 (AYMVSAAGLGLVAIYFATQVV).

It belongs to the glycoside-pentoside-hexuronide (GPH) cation symporter transporter (TC 2.A.2) family. In terms of tissue distribution, expressed in the epididymis. Primarily expressed in the prostate, but also in other tissues.

It localises to the membrane. The catalysed reaction is sucrose(out) + H(+)(out) = sucrose(in) + H(+)(in). In terms of biological role, proton-associated sucrose transporter. May be able to transport also glucose and fructose. This Mus musculus (Mouse) protein is Solute carrier family 45 member 3 (Slc45a3).